The sequence spans 499 residues: Argininosuccinate lyase (499 aa).

Residues Met1 to Arg22 are disordered. Residues His7–Arg22 show a composition bias toward basic and acidic residues.

The protein belongs to the lyase 1 family. Argininosuccinate lyase subfamily.

It is found in the cytoplasm. It catalyses the reaction 2-(N(omega)-L-arginino)succinate = fumarate + L-arginine. It participates in amino-acid biosynthesis; L-arginine biosynthesis; L-arginine from L-ornithine and carbamoyl phosphate: step 3/3. This is Argininosuccinate lyase from Haloarcula marismortui (strain ATCC 43049 / DSM 3752 / JCM 8966 / VKM B-1809) (Halobacterium marismortui).